A 347-amino-acid polypeptide reads, in one-letter code: NADH-ubiquinone oxidoreductase chain 2 (347 aa).

11 consecutive transmembrane segments (helical) span residues 2-22, 25-45, 56-76, 96-116, 122-142, 149-169, 178-197, 202-219, 241-261, 278-298, and 326-346; these read SPYV…MTLI, HWLT…PLMT, AIKY…SAIF, FMMT…FWVP, IPLL…ISIF, LNMS…GWGG, ILAY…IMIY, ILNL…FMVL, MIII…TGFM, LAMM…RIIY, and IPTL…FITL.

The protein belongs to the complex I subunit 2 family.

The protein localises to the mitochondrion inner membrane. The catalysed reaction is a ubiquinone + NADH + 5 H(+)(in) = a ubiquinol + NAD(+) + 4 H(+)(out). Functionally, core subunit of the mitochondrial membrane respiratory chain NADH dehydrogenase (Complex I) that is believed to belong to the minimal assembly required for catalysis. Complex I functions in the transfer of electrons from NADH to the respiratory chain. The immediate electron acceptor for the enzyme is believed to be ubiquinone. In Didelphis virginiana (North American opossum), this protein is NADH-ubiquinone oxidoreductase chain 2 (MT-ND2).